The chain runs to 103 residues: Small ribosomal subunit protein uS10 (103 aa).

This sequence belongs to the universal ribosomal protein uS10 family. As to quaternary structure, part of the 30S ribosomal subunit.

In terms of biological role, involved in the binding of tRNA to the ribosomes. This chain is Small ribosomal subunit protein uS10, found in Borrelia duttonii (strain Ly).